Consider the following 85-residue polypeptide: UPF0297 protein CPR_1749 (85 aa).

This sequence belongs to the UPF0297 family.

The sequence is that of UPF0297 protein CPR_1749 from Clostridium perfringens (strain SM101 / Type A).